The primary structure comprises 696 residues: Polyribonucleotide nucleotidyltransferase (696 aa).

Residues Asp-489 and Asp-495 each coordinate Mg(2+). The region spanning 556 to 615 (PQYVTMKINPEKIRDVIGKGGVVIREITEATNCAIDISDDGTIKIAAHTTEEGEAAKRRI) is the KH domain. Positions 625–693 (GKVYEGTVVK…RQGRVRLSMK (69 aa)) constitute an S1 motif domain.

This sequence belongs to the polyribonucleotide nucleotidyltransferase family. In terms of assembly, component of the RNA degradosome, which is a multiprotein complex involved in RNA processing and mRNA degradation. Mg(2+) is required as a cofactor.

The protein localises to the cytoplasm. It carries out the reaction RNA(n+1) + phosphate = RNA(n) + a ribonucleoside 5'-diphosphate. In terms of biological role, involved in mRNA degradation. Catalyzes the phosphorolysis of single-stranded polyribonucleotides processively in the 3'- to 5'-direction. The protein is Polyribonucleotide nucleotidyltransferase of Coxiella burnetii (strain RSA 331 / Henzerling II).